The primary structure comprises 683 residues: THO complex subunit 5 (683 aa).

The disordered stretch occupies residues 1-42; sequence MSSESSKKRKPKVIRSDGAPAEGKRNRSDTEQEGKYYSEEAE. The residue at position 2 (Ser2) is an N-acetylserine. The interval 2-144 is interaction with CSF1R; that stretch reads SSESSKKRKP…YEVMHLQKEI (143 aa). Positions 2–199 are interaction with THOC7; that stretch reads SSESSKKRKP…RLDWELEQRK (198 aa). 2 positions are modified to phosphoserine: Ser5 and Ser6. A Nuclear localization signal motif is present at residues 7 to 10; that stretch reads KKRK. Over residues 22-42 the composition is skewed to basic and acidic residues; the sequence is EGKRNRSDTEQEGKYYSEEAE. Residues 81–247 adopt a coiled-coil conformation; it reads AIEIEERRIQ…QASLPVQEYL (167 aa). Lys153 is covalently cross-linked (Glycyl lysine isopeptide (Lys-Gly) (interchain with G-Cter in SUMO2)). A Phosphotyrosine; by SRC modification is found at Tyr225. The segment at 247–683 is tandem RWD domains; sequence LFMPFDQAHK…NHPQGFFSHR (437 aa). The interval 301–336 is disordered; sequence FKPPEDSQDDESDSDAEEEQTTKRRRPTLGVQLDDK. A compositionally biased stretch (acidic residues) spans 306 to 319; it reads DSQDDESDSDAEEE. 3 positions are modified to phosphoserine: Ser307, Ser312, and Ser314. Position 328 is a phosphothreonine (Thr328).

It belongs to the THOC5 family. As to quaternary structure, component of the THO subcomplex, which is composed of THOC1, THOC2, THOC3, THOC5, THOC6 and THOC7. The THO subcomplex interacts with DDX39B to form the THO-DDX39B complex which multimerizes into a 28-subunit tetrameric assembly. Component of the transcription/export (TREX) complex at least composed of ALYREF/THOC4, DDX39B, SARNP/CIP29, CHTOP and the THO subcomplex; in the complex interacts with THOC1, THOC2, THOC5, THOC6 and THOC7; forms a coiled-coil dimer with THOC7; together with THOC6 and THOC7, plays a key structural role in oligomerization of the THO-DDX39B complex. TREX seems to have a dynamic structure involving ATP-dependent remodeling. Interacts with phosphorylated CSF1R. Interacts (via N-terminus) with the NTF2 domain of NXF1. Forms a complex with CEBPB. Interacts with CPSF6; indicative for an association with the cleavage factor Im (CFIm) complex. Interacts with LUZP4. Interacts with NCBP3. In terms of processing, phosphorylated on tyrosine upon binding to activated CSF1R; which causes a dissociation of the two proteins. Phosphorylation on Ser-5 and/or Ser-6 is required for nuclear export. Phosphorylated on Thr-328 in insulin-stimulated adipocytes. Phosphorylation at Tyr-225 modulates mRNA binding. Ubiquitously expressed.

It is found in the nucleus. The protein localises to the cytoplasm. Its function is as follows. Component of the THO subcomplex of the TREX complex which is thought to couple mRNA transcription, processing and nuclear export, and which specifically associates with spliced mRNA and not with unspliced pre-mRNA. Plays a key structural role in the oligomerization of the THO-DDX39B complex. TREX is recruited to spliced mRNAs by a transcription-independent mechanism, binds to mRNA upstream of the exon-junction complex (EJC) and is recruited in a splicing- and cap-dependent manner to a region near the 5' end of the mRNA where it functions in mRNA export to the cytoplasm via the TAP/NXF1 pathway. THOC5 in conjunction with ALYREF/THOC4 functions in NXF1-NXT1 mediated nuclear export of HSP70 mRNA; both proteins enhance the RNA binding activity of NXF1 and are required for NXF1 localization to the nuclear rim. Involved in transcription elongation and genome stability. Involved in alternative polyadenylation site choice by recruiting CPSF6 to 5' region of target genes; probably mediates association of the TREX and CFIm complexes. In terms of biological role, regulates the expression of myeloid transcription factors CEBPA, CEBPB and GAB2 by enhancing the levels of phosphatidylinositol 3,4,5-trisphosphate. May be involved in the differentiation of granulocytes and adipocytes. Essential for hematopoietic primitive cell survival and plays an integral role in monocytic development. Functionally, (Microbial infection) The TREX complex is essential for the export of Kaposi's sarcoma-associated herpesvirus (KSHV) intronless mRNAs and infectious virus production. This is THO complex subunit 5 (THOC5) from Homo sapiens (Human).